Here is a 227-residue protein sequence, read N- to C-terminus: Eukaryotic translation initiation factor NCBP (227 aa).

Positions 1–22 (MEPAAEKREAEQEELQQQHDEP) are enriched in basic and acidic residues. The disordered stretch occupies residues 1 to 43 (MEPAAEKREAEQEELQQQHDEPAVPSADDDEAEAEENERRNRE). Residues 27–36 (ADDDEAEAEE) show a composition bias toward acidic residues.

Belongs to the eukaryotic initiation factor 4E family. As to quaternary structure, EIF4F is a multi-subunit complex, the composition of which varies with external and internal environmental conditions. It is composed of at least EIF4A, EIF4E and EIF4G. EIF4E is also known to interact with other partners. In higher plants two isoforms of EIF4F have been identified, named isoform EIF4F and isoform EIF(iso)4F. Isoform EIF4F has subunits p220 and p26, whereas isoform EIF(iso)4F has subunits p82 and p28.

Its function is as follows. Recognizes and binds the 7-methylguanosine-containing mRNA cap during an early step in the initiation of protein synthesis and facilitates ribosome binding by inducing the unwinding of the mRNAs secondary structures. The chain is Eukaryotic translation initiation factor NCBP (NCBP) from Oryza sativa subsp. japonica (Rice).